Consider the following 252-residue polypeptide: Type III pantothenate kinase (252 aa).

Residue Asp6–Lys13 participates in ATP binding. Residues Tyr93 and Gly100–Arg103 each bind substrate. The Proton acceptor role is filled by Asp102. Thr126 lines the ATP pocket. Thr179 is a binding site for substrate.

This sequence belongs to the type III pantothenate kinase family. In terms of assembly, homodimer. The cofactor is NH4(+). Requires K(+) as cofactor.

The protein localises to the cytoplasm. The enzyme catalyses (R)-pantothenate + ATP = (R)-4'-phosphopantothenate + ADP + H(+). Its pathway is cofactor biosynthesis; coenzyme A biosynthesis; CoA from (R)-pantothenate: step 1/5. Catalyzes the phosphorylation of pantothenate (Pan), the first step in CoA biosynthesis. This chain is Type III pantothenate kinase, found in Cellvibrio japonicus (strain Ueda107) (Pseudomonas fluorescens subsp. cellulosa).